Here is a 57-residue protein sequence, read N- to C-terminus: Large ribosomal subunit protein uL30 (57 aa).

The protein belongs to the universal ribosomal protein uL30 family. In terms of assembly, part of the 50S ribosomal subunit.

The chain is Large ribosomal subunit protein uL30 from Acholeplasma laidlawii (strain PG-8A).